We begin with the raw amino-acid sequence, 156 residues long: MIQSQISQNARLALSEVILLAKARKDLSFAQITEGTGLSEAFVTAALLGQHPLPASAAQVVGDKLGLDADGIALLQTIPLRGSIQGGVPTDPTIYRFYEMLQVYGTTLKALVHEKFGDGIISAINFKLDVKKVDDPEGGSRAVITLDGKYLPTKPF.

Active-site residues include arginine 96, glutamate 99, and serine 122.

This sequence belongs to the cyanase family.

It carries out the reaction cyanate + hydrogencarbonate + 3 H(+) = NH4(+) + 2 CO2. Its function is as follows. Catalyzes the reaction of cyanate with bicarbonate to produce ammonia and carbon dioxide. The chain is Cyanate hydratase from Pseudomonas entomophila (strain L48).